The chain runs to 395 residues: Putative pyridoxal phosphate-dependent acyltransferase (395 aa).

110–111 serves as a coordination point for pyridoxal 5'-phosphate; sequence GF. His-135 is a substrate binding site. Pyridoxal 5'-phosphate contacts are provided by residues Ser-185, 210 to 213, and 240 to 243; these read DDAH and TLSK. N6-(pyridoxal phosphate)lysine is present on Lys-243. Thr-357 is a substrate binding site.

The protein belongs to the class-II pyridoxal-phosphate-dependent aminotransferase family. As to quaternary structure, homodimer. Pyridoxal 5'-phosphate serves as cofactor.

This Staphylococcus aureus (strain COL) protein is Putative pyridoxal phosphate-dependent acyltransferase.